A 374-amino-acid chain; its full sequence is uncharacterized protein (374 aa).

It belongs to the mimivirus R640 family.

It is found in the virion. This is an uncharacterized protein from Acanthamoeba polyphaga (Amoeba).